A 300-amino-acid chain; its full sequence is UDP-N-acetylenolpyruvoylglucosamine reductase (300 aa).

The 166-residue stretch at 28–193 (KTGGPADVLA…LQATFALEKG (166 aa)) folds into the FAD-binding PCMH-type domain. Arg172 is a catalytic residue. Ser222 acts as the Proton donor in catalysis. Glu292 is an active-site residue.

This sequence belongs to the MurB family. It depends on FAD as a cofactor.

The protein resides in the cytoplasm. It carries out the reaction UDP-N-acetyl-alpha-D-muramate + NADP(+) = UDP-N-acetyl-3-O-(1-carboxyvinyl)-alpha-D-glucosamine + NADPH + H(+). It functions in the pathway cell wall biogenesis; peptidoglycan biosynthesis. Cell wall formation. In Enterococcus faecalis (strain ATCC 700802 / V583), this protein is UDP-N-acetylenolpyruvoylglucosamine reductase.